We begin with the raw amino-acid sequence, 330 residues long: Inactive hydroxysteroid dehydrogenase-like protein 1 (330 aa).

Ala-2 carries the N-acetylalanine modification. The tract at residues 2-82 (AAVDSFYLLY…SGATDGIGKA (81 aa)) is required for mitochondria translocation. NADP(+) contacts are provided by residues 74–80 (GATDGIG), Asp-125, and Lys-222.

This sequence belongs to the short-chain dehydrogenases/reductases (SDR) family. 17-beta-HSD 3 subfamily. Interacts with STYXL1.

The protein localises to the mitochondrion. This is Inactive hydroxysteroid dehydrogenase-like protein 1 (Hsdl1) from Rattus norvegicus (Rat).